The primary structure comprises 523 residues: 3-hydroxybenzoate--CoA/4-hydroxybenzoate--CoA ligase (523 aa).

It belongs to the ATP-dependent AMP-binding enzyme family. Benzoate-CoA ligase subfamily.

It catalyses the reaction 4-hydroxybenzoate + ATP + CoA = 4-hydroxybenzoyl-CoA + AMP + diphosphate. The enzyme catalyses 3-hydroxybenzoate + ATP + CoA = 3-hydroxybenzoyl-CoA + AMP + diphosphate. In terms of biological role, catalyzes the ligation of 3-hydroxybenzoate or 4-hydroxybenzoate and CoA at the expense of ATP. The enzyme shows low activity towards benzoate, 4-aminobenzoate, 3-aminobenzoate, 3-fluorobenzoate, 4-fluorobenzoate, 3-chlorobenzoate, and 4-chlorobenzoate. There is no activity with 3,4-dihydroxybenzoate, 2,3-dihydroxybenzoate, and 2-hydroxybenzoate as substrates. The polypeptide is 3-hydroxybenzoate--CoA/4-hydroxybenzoate--CoA ligase (hcl) (Thauera aromatica).